A 298-amino-acid chain; its full sequence is (DL)-glycerol-3-phosphatase 1, mitochondrial (298 aa).

The transit peptide at 1 to 46 (MLTTPTRFVALRIPFRSSNKIPISIAPSPKVFPRKPVIRVPASLRF) directs the protein to the mitochondrion. The Nucleophile role is filled by Asp77. Positions 77, 79, and 242 each coordinate Mg(2+). The active-site Proton donor is the Asp79.

Belongs to the HAD-like hydrolase superfamily. DOG/GPP family. The cofactor is Mg(2+). As to expression, ubiquitous with highest expression in siliques. Mainly restricted to the meristem of immature flower and vascular elements of the root, shoot, leave, siliqua and developing embryo (at the protein level).

It is found in the mitochondrion. It catalyses the reaction sn-glycerol 1-phosphate + H2O = glycerol + phosphate. The catalysed reaction is sn-glycerol 3-phosphate + H2O = glycerol + phosphate. The enzyme catalyses 5-amino-6-(5-phospho-D-ribitylamino)uracil + H2O = 5-amino-6-(D-ribitylamino)uracil + phosphate. Its function is as follows. Acts as a glycerol-3-phosphatase with higher stereospecificity for L-glycerol-3-phosphate than DL-glycerol-3-phosphate. Can also dephosphorylate in vitro 5-amino-6-(5-phospho-D-ribitylamino)uracil, also known as ARPP. In Arabidopsis thaliana (Mouse-ear cress), this protein is (DL)-glycerol-3-phosphatase 1, mitochondrial.